A 190-amino-acid chain; its full sequence is Small ribosomal subunit protein uS5 (190 aa).

Residues 21-84 (FADRLVAINR…EQAKRQMIRV (64 aa)) form the S5 DRBM domain. Residues 156 to 190 (KKEQSPRSVAQRRGKKVADILPKRDEAPAAEAAEA) are disordered. The segment covering 171-182 (KVADILPKRDEA) has biased composition (basic and acidic residues).

It belongs to the universal ribosomal protein uS5 family. Part of the 30S ribosomal subunit. Contacts proteins S4 and S8.

In terms of biological role, with S4 and S12 plays an important role in translational accuracy. Functionally, located at the back of the 30S subunit body where it stabilizes the conformation of the head with respect to the body. The chain is Small ribosomal subunit protein uS5 from Ruegeria pomeroyi (strain ATCC 700808 / DSM 15171 / DSS-3) (Silicibacter pomeroyi).